Reading from the N-terminus, the 527-residue chain is MLMLLVFGVLLHEVPLSGQDEAHPEADRVPGEALYDYSSLRLPEEHIPFFLHSNRHVASVCREDSHCPYKKHLESLNSCWGYEKSCTPESRFGSPICSYVDLGWTDTLESAQDMFWKQADFGYARERLEEIRMFCRPESASDSSLLCSRYLQYCRATGLYLDLRNIKRNHDRFKEDFLQGGDIGGYCKLDRHALVSEGQRKSPLQSWFAELQGYTQLNFRPIEDAKCDIVVEKPTYFMKLDAGINMYHHFCDFLNLYLTQHINNSFSTDVYIVMWDTSSYGYGDLFSDTWKAFTDYDVIHLKTYDSKKVCFKEAVFSLLPRMRYGLFYNTPLISGCQNTGLFRAFSQHVLHRLNISQEGPKDGKLRVTILARSTEYRKILNQNELVNALKTVSTFEVRVVDYKYRELGFLDQLRITHNTDIFIGMHGAGLTHLLFLPDWAAVFELYNCEDERCYLDLARLRGIYYITWQKPSKVFPQDKGHHPTLGEHPKFTNYSFDVEEFMYLVLQAAEHVLQHPQWPLKKNHDEL.

Positions 1-19 are cleaved as a signal peptide; the sequence is MLMLLVFGVLLHEVPLSGQ. Positions 295 to 297 match the Required for optimal activity motif; it reads DYD. N354 carries N-linked (GlcNAc...) asparagine glycosylation. The short motif at 524–527 is the Prevents secretion from ER element; that stretch reads HDEL.

The protein belongs to the glycosyltransferase 61 family.

The protein localises to the endoplasmic reticulum lumen. The catalysed reaction is L-seryl-[protein] + UDP-N-acetyl-alpha-D-glucosamine = 3-O-(N-acetyl-beta-D-glucosaminyl)-L-seryl-[protein] + UDP + H(+). It carries out the reaction L-threonyl-[protein] + UDP-N-acetyl-alpha-D-glucosamine = 3-O-(N-acetyl-beta-D-glucosaminyl)-L-threonyl-[protein] + UDP + H(+). Functionally, catalyzes the transfer of a single N-acetylglucosamine from UDP-GlcNAc to a serine or threonine residue in extracellular proteins resulting in their modification with a beta-linked N-acetylglucosamine (O-GlcNAc). Specifically glycosylates the Thr residue located between the fifth and sixth conserved cysteines of folded EGF-like domains. This chain is EGF domain-specific O-linked N-acetylglucosamine transferase (Eogt), found in Rattus norvegicus (Rat).